Consider the following 428-residue polypeptide: 3-phosphoshikimate 1-carboxyvinyltransferase (428 aa).

3 residues coordinate 3-phosphoshikimate: Lys20, Ser21, and Arg25. Lys20 contacts phosphoenolpyruvate. Gly92 and Arg120 together coordinate phosphoenolpyruvate. 3-phosphoshikimate is bound by residues Ser166, Gln168, Asp314, and Lys341. Phosphoenolpyruvate is bound at residue Gln168. Asp314 functions as the Proton acceptor in the catalytic mechanism. 2 residues coordinate phosphoenolpyruvate: Arg345 and Arg387.

Belongs to the EPSP synthase family. Monomer.

It is found in the cytoplasm. It catalyses the reaction 3-phosphoshikimate + phosphoenolpyruvate = 5-O-(1-carboxyvinyl)-3-phosphoshikimate + phosphate. The protein operates within metabolic intermediate biosynthesis; chorismate biosynthesis; chorismate from D-erythrose 4-phosphate and phosphoenolpyruvate: step 6/7. Catalyzes the transfer of the enolpyruvyl moiety of phosphoenolpyruvate (PEP) to the 5-hydroxyl of shikimate-3-phosphate (S3P) to produce enolpyruvyl shikimate-3-phosphate and inorganic phosphate. This chain is 3-phosphoshikimate 1-carboxyvinyltransferase, found in Listeria monocytogenes serotype 4b (strain CLIP80459).